Here is a 447-residue protein sequence, read N- to C-terminus: GTPase Der (447 aa).

EngA-type G domains follow at residues 4 to 165 (QIIA…PKEK) and 180 to 357 (VQIV…KNWN). GTP contacts are provided by residues 10–17 (GRPNVGKS), 57–61 (DTPGL), 119–122 (NKCE), 186–193 (GRPNAGKS), 233–237 (DTAGL), and 298–301 (NKWD). The KH-like domain occupies 358–443 (KKITTSKLNE…PIRFAYVKTK (86 aa)).

The protein belongs to the TRAFAC class TrmE-Era-EngA-EngB-Septin-like GTPase superfamily. EngA (Der) GTPase family. Associates with the 50S ribosomal subunit.

Functionally, GTPase that plays an essential role in the late steps of ribosome biogenesis. The chain is GTPase Der from Rickettsia canadensis (strain McKiel).